The following is a 287-amino-acid chain: MKKKKRFKQKLLIASLVIGLVAVLSGCGYSTDPITKDSTGFWSHYIVFPLSWVITWFSDLFGGNYAVGIIVVTILIRLLIMPLMIKQLKSQKAMTSLQPKIKELQEKYSSKDNETKQKLQQETMRLYQENSVNPMMGCLPLLIQMPILLGFYQAISRTAEIKTDTFLWMQLGNPDPYYILPIVAALTTFLSSKISMMGQTQQNKSMAMIVYIMPVMILFMGITLPSALALYWIIGNIFTVFQTLLINNPFKNKREQEALAAAQLEEERLKKKAANMKASKKGGKKRK.

Positions 1 to 26 are cleaved as a signal peptide; the sequence is MKKKKRFKQKLLIASLVIGLVAVLSG. C27 carries N-palmitoyl cysteine lipidation. The S-diacylglycerol cysteine moiety is linked to residue C27. Transmembrane regions (helical) follow at residues 65 to 85, 135 to 155, 178 to 198, 207 to 224, and 228 to 250; these read YAVGIIVVTILIRLLIMPLMI, MMGCLPLLIQMPILLGFYQAI, YILPIVAALTTFLSSKISMMG, AMIVYIMPVMILFMGITL, and LALYWIIGNIFTVFQTLLINNPF.

This sequence belongs to the OXA1/ALB3/YidC family. Type 2 subfamily.

Its subcellular location is the cell membrane. In terms of biological role, required for the insertion and/or proper folding and/or complex formation of integral membrane proteins into the membrane. Involved in integration of membrane proteins that insert both dependently and independently of the Sec translocase complex, as well as at least some lipoproteins. This chain is Membrane protein insertase YidC 2, found in Listeria innocua serovar 6a (strain ATCC BAA-680 / CLIP 11262).